Reading from the N-terminus, the 179-residue chain is Sec-independent protein translocase protein TatB (179 aa).

The helical transmembrane segment at 1 to 21 (MLDLGLSKMALIGVVALVVLG) threads the bilayer. Positions 101-115 (GAAGDAGSVGSPGSD) are enriched in low complexity. The interval 101–134 (GAAGDAGSVGSPGSDTPAAPSWRGSSAALAPKRR) is disordered.

Belongs to the TatB family. As to quaternary structure, the Tat system comprises two distinct complexes: a TatABC complex, containing multiple copies of TatA, TatB and TatC subunits, and a separate TatA complex, containing only TatA subunits. Substrates initially bind to the TatABC complex, which probably triggers association of the separate TatA complex to form the active translocon.

It localises to the cell inner membrane. In terms of biological role, part of the twin-arginine translocation (Tat) system that transports large folded proteins containing a characteristic twin-arginine motif in their signal peptide across membranes. Together with TatC, TatB is part of a receptor directly interacting with Tat signal peptides. TatB may form an oligomeric binding site that transiently accommodates folded Tat precursor proteins before their translocation. The sequence is that of Sec-independent protein translocase protein TatB from Burkholderia orbicola (strain AU 1054).